A 431-amino-acid chain; its full sequence is Enolase (431 aa).

Position 167 (Gln-167) interacts with (2R)-2-phosphoglycerate. Glu-209 serves as the catalytic Proton donor. Mg(2+) contacts are provided by Asp-246, Glu-289, and Asp-316. Residues Lys-341, Arg-370, Ser-371, and Lys-392 each contribute to the (2R)-2-phosphoglycerate site. Residue Lys-341 is the Proton acceptor of the active site.

The protein belongs to the enolase family. As to quaternary structure, component of the RNA degradosome, a multiprotein complex involved in RNA processing and mRNA degradation. Mg(2+) serves as cofactor.

The protein localises to the cytoplasm. It is found in the secreted. The protein resides in the cell surface. The catalysed reaction is (2R)-2-phosphoglycerate = phosphoenolpyruvate + H2O. Its pathway is carbohydrate degradation; glycolysis; pyruvate from D-glyceraldehyde 3-phosphate: step 4/5. Catalyzes the reversible conversion of 2-phosphoglycerate (2-PG) into phosphoenolpyruvate (PEP). It is essential for the degradation of carbohydrates via glycolysis. The chain is Enolase from Shewanella baltica (strain OS223).